We begin with the raw amino-acid sequence, 262 residues long: Beta-phosphoglucomutase (262 aa).

The active-site Nucleophile is D29. Mg(2+) contacts are provided by D29 and D31. Residue D29 is modified to 4-aspartylphosphate. D31 acts as the Proton donor/acceptor in catalysis. Beta-D-glucose 6-phosphate contacts are provided by D31, G79, R82, S157, and N159. D215 lines the Mg(2+) pocket.

Belongs to the HAD-like hydrolase superfamily. CbbY/CbbZ/Gph/YieH family. In terms of assembly, monomer. Mg(2+) is required as a cofactor. Post-translationally, autophosphorylated.

It catalyses the reaction beta-D-glucose 1-phosphate = beta-D-glucose 6-phosphate. Catalyzes the interconversion of D-glucose 1-phosphate (G1P) and D-glucose 6-phosphate (G6P), forming beta-D-glucose 1,6-(bis)phosphate (beta-G16P) as an intermediate. The sequence is that of Beta-phosphoglucomutase from Mycobacterium bovis (strain ATCC BAA-935 / AF2122/97).